A 231-amino-acid polypeptide reads, in one-letter code: Large ribosomal subunit protein uL1 (231 aa).

Belongs to the universal ribosomal protein uL1 family. In terms of assembly, part of the 50S ribosomal subunit.

Binds directly to 23S rRNA. The L1 stalk is quite mobile in the ribosome, and is involved in E site tRNA release. Functionally, protein L1 is also a translational repressor protein, it controls the translation of the L11 operon by binding to its mRNA. The chain is Large ribosomal subunit protein uL1 from Staphylococcus epidermidis (strain ATCC 35984 / DSM 28319 / BCRC 17069 / CCUG 31568 / BM 3577 / RP62A).